Reading from the N-terminus, the 118-residue chain is Large ribosomal subunit protein bL19 (118 aa).

The protein belongs to the bacterial ribosomal protein bL19 family.

This protein is located at the 30S-50S ribosomal subunit interface and may play a role in the structure and function of the aminoacyl-tRNA binding site. This chain is Large ribosomal subunit protein bL19, found in Levilactobacillus brevis (strain ATCC 367 / BCRC 12310 / CIP 105137 / JCM 1170 / LMG 11437 / NCIMB 947 / NCTC 947) (Lactobacillus brevis).